The following is a 226-amino-acid chain: UPF0173 metal-dependent hydrolase Minf_0129 (226 aa).

It belongs to the UPF0173 family.

The sequence is that of UPF0173 metal-dependent hydrolase Minf_0129 from Methylacidiphilum infernorum (isolate V4) (Methylokorus infernorum (strain V4)).